Reading from the N-terminus, the 450-residue chain is Exodeoxyribonuclease 7 large subunit (450 aa).

The protein belongs to the XseA family. In terms of assembly, heterooligomer composed of large and small subunits.

It localises to the cytoplasm. The enzyme catalyses Exonucleolytic cleavage in either 5'- to 3'- or 3'- to 5'-direction to yield nucleoside 5'-phosphates.. Bidirectionally degrades single-stranded DNA into large acid-insoluble oligonucleotides, which are then degraded further into small acid-soluble oligonucleotides. The chain is Exodeoxyribonuclease 7 large subunit from Listeria monocytogenes serovar 1/2a (strain ATCC BAA-679 / EGD-e).